Reading from the N-terminus, the 371-residue chain is 4-hydroxy-3-methylbut-2-en-1-yl diphosphate synthase (flavodoxin) (371 aa).

[4Fe-4S] cluster is bound by residues Cys-270, Cys-273, Cys-305, and Glu-312.

The protein belongs to the IspG family. [4Fe-4S] cluster serves as cofactor.

The catalysed reaction is (2E)-4-hydroxy-3-methylbut-2-enyl diphosphate + oxidized [flavodoxin] + H2O + 2 H(+) = 2-C-methyl-D-erythritol 2,4-cyclic diphosphate + reduced [flavodoxin]. It functions in the pathway isoprenoid biosynthesis; isopentenyl diphosphate biosynthesis via DXP pathway; isopentenyl diphosphate from 1-deoxy-D-xylulose 5-phosphate: step 5/6. Converts 2C-methyl-D-erythritol 2,4-cyclodiphosphate (ME-2,4cPP) into 1-hydroxy-2-methyl-2-(E)-butenyl 4-diphosphate. The protein is 4-hydroxy-3-methylbut-2-en-1-yl diphosphate synthase (flavodoxin) of Shewanella sp. (strain W3-18-1).